Reading from the N-terminus, the 435-residue chain is Hexane cyclase xenF (435 aa).

Positions 1–23 are cleaved as a signal peptide; sequence MSPAANMFRTLTLTALVSAVVSA. Asn-81 and Asn-156 each carry an N-linked (GlcNAc...) asparagine glycan.

Belongs to the Diels-Alderase family.

The protein operates within mycotoxin biosynthesis. Its function is as follows. Hexane cyclase; part of the gene cluster that mediates the biosynthesis of xenoacremones such as xenoacremone A, a compound that shows inhibitory activity toward the PI3K/AKT signaling pathway and which has the ability to induce apoptosis of A549 lung cancer cells. Within the pathway, cooperation of the hybrid PKS-NRPS xenE and the trans-acting enoyl reductase xenG is responsible for the formation of the reduced tyrosine-nonaketide derivative. The alpha/beta hydrolase xenA then accelerates intramolecular nucleophilic attack to give a pyrrolidone derivative. Subsequently, three enzymes, xenF, xenD, and xenC, coordinately participate in the conversion to xenoacremone B. XenF catalyzes sigmatropic rearrangement to form an A-ring, which leads to an unusual intermediate with a hexane ring, which is required for the formation of the tricarbocyclic product. Epoxidation catalyzed by xenD and the formation of the paracyclophane ether catalyzed by xenC initiate a spontaneous intramolecular Diels-Alder (IMDA) reaction to yield xenoacremone B. Spontaneous hydration of xenoacremone B leads to the formation of xenoacremone A, which undergoes subsequent methylation to afford xenoacremone C. In Xenoacremonium sinensis (Endophyte fungus), this protein is Hexane cyclase xenF.